Here is an 874-residue protein sequence, read N- to C-terminus: MTISHIDPEYQANTIEPSVQQDWENRKVFKVADTVEGKHRYILSMFPYPSGKLHMGHVRNYTIGDVISRFYRLKGETVLQPMGWDAFGLPAENAAIAHKVAPAKWTFENIAYMRDQLKKLGLSVDWDREFATCTPEYYHWEQWLFVQLYKKGLIYRKLSTVNWDPVDQTVLANEQVENGRGWRSGALVEKRDIPMYYFRITDYAQELLDDLDTLQDGWPQQVLTMQRNWIGRSTGMEITFPSANTEIYADGLTVYTTRADTLMGVTYVAVAAEHPLALKAAENNPELAAFIEECRIGSVAEADLATAEKKGMATGLFVKHPVTGEELPVWIANYVLMSYGSGAVMAVPAHDERDFEFANKFNLPIKQVIDAKGADDADYSATEWQEWYGSKEGKLVNSGEFDGLEFQAAFDAFLAKLEPQGLANSKVQFRLRDWGVSRQRYWGCPIPMINCDTCGQVTVPEDQLPVVLPTDVVPDGSGNPLNKMPEFYETKCPCCGGDARRETDTLDTFVESSWYYARYASPDFTGGIVKPEAAKNWLPVNQYIGGVEHAILHLLYARFFHKLMHDEGVVQGNEPFTNLLTQGMVLADTFYREAENGKKTWFNPANIELERDEKGRIISAKYSGDGQEVIIGGQEKMSKSKNNGIDPQAIIDQYGADTARVFMMFAAPPDQSLEWSDAGVEGANRFLKRVWRLVASFLEKGNSATAIDKANLSKDAQDLRRKTHETIQKVSDDIERRHAFNTAIAALMELLNASNKFEAKDDNDVAVEREAITTLLTLLAPFAPHLSQTLLAQFGTDLTEATFPEVDASALTRNTQTIVVQVNGKLRGKLEVSVDISKDELLAQAKALPEVQQFLTGPTKKEIVVPNKLVNLVV.

Positions 47–57 (PYPSGKLHMGH) match the 'HIGH' region motif. A 'KMSKS' region motif is present at residues 636-640 (KMSKS). Position 639 (K639) interacts with ATP.

Belongs to the class-I aminoacyl-tRNA synthetase family.

The protein resides in the cytoplasm. It carries out the reaction tRNA(Leu) + L-leucine + ATP = L-leucyl-tRNA(Leu) + AMP + diphosphate. This Acinetobacter baumannii (strain SDF) protein is Leucine--tRNA ligase.